The following is a 146-amino-acid chain: Large ribosomal subunit protein bL9 (146 aa).

It belongs to the bacterial ribosomal protein bL9 family.

Its function is as follows. Binds to the 23S rRNA. This is Large ribosomal subunit protein bL9 from Nautilia profundicola (strain ATCC BAA-1463 / DSM 18972 / AmH).